The following is a 54-amino-acid chain: uncharacterized protein (54 aa).

Residues 1–13 form the signal peptide; sequence MLLCFHMCQRIMW.

Its subcellular location is the secreted. This is an uncharacterized protein from Saccharomyces cerevisiae (strain ATCC 204508 / S288c) (Baker's yeast).